Reading from the N-terminus, the 192-residue chain is Shikimate kinase (192 aa).

Residue 15–20 (GAGKTT) participates in ATP binding. Residue Thr-19 participates in Mg(2+) binding. Substrate-binding residues include Asp-37, Arg-61, and Gly-83. An ATP-binding site is contributed by Arg-121. A substrate-binding site is contributed by Arg-140.

It belongs to the shikimate kinase family. As to quaternary structure, monomer. Requires Mg(2+) as cofactor.

It is found in the cytoplasm. It catalyses the reaction shikimate + ATP = 3-phosphoshikimate + ADP + H(+). The protein operates within metabolic intermediate biosynthesis; chorismate biosynthesis; chorismate from D-erythrose 4-phosphate and phosphoenolpyruvate: step 5/7. Functionally, catalyzes the specific phosphorylation of the 3-hydroxyl group of shikimic acid using ATP as a cosubstrate. This is Shikimate kinase from Cupriavidus pinatubonensis (strain JMP 134 / LMG 1197) (Cupriavidus necator (strain JMP 134)).